The primary structure comprises 114 residues: KPKEDKEWVKFKAKHITSQSVADFNCNKTMNDPDFTPDGQCKPVNTFIHSNTGPVKDICRRASGRVNKSSTQQFPLTTCNKPIRCKYSQSNTTNFICITCRDNYPVHFVKIGKC.

His-15 acts as the Proton acceptor in catalysis. 4 disulfides stabilise this stretch: Cys-26-Cys-79, Cys-41-Cys-85, Cys-59-Cys-100, and Cys-97-Cys-114. An N-linked (GlcNAc...) asparagine glycan is attached at Asn-27. 42-46 (KPVNT) is a binding site for substrate. Asn-67 and Asn-91 each carry an N-linked (GlcNAc...) asparagine glycan. Residue His-107 is the Proton donor of the active site.

Belongs to the pancreatic ribonuclease family. Monomer. In terms of processing, there are at least five different forms arising from glycan heterogeneity.

The protein resides in the secreted. Its function is as follows. Endonuclease, hydrolyzes highly polymerized RNA, poly(U) and poly(C), and the dinucleotides CpA and UpA. Hydrolyzes rCA, rUA and rUG. Has cytotoxic activity against cultured human submaxillary gland carcinoma cells. The polypeptide is Amphinase-4 (Lithobates pipiens (Northern leopard frog)).